The sequence spans 196 residues: Carnitine operon protein CaiE (196 aa).

The disordered stretch occupies residues 173-196 (TQPLRQMEENRPRLQGTTDVTPKR). Polar residues predominate over residues 187 to 196 (QGTTDVTPKR).

Belongs to the transferase hexapeptide repeat family.

It participates in amine and polyamine metabolism; carnitine metabolism. Overproduction of CaiE stimulates the activity of CaiB and CaiD. The chain is Carnitine operon protein CaiE from Escherichia coli O157:H7.